The chain runs to 323 residues: tRNA dimethylallyltransferase (323 aa).

Residue 13-20 coordinates ATP; the sequence is GPTASGKT. 15–20 serves as a coordination point for substrate; it reads TASGKT. 4 interaction with substrate tRNA regions span residues 42–45, 166–170, 251–256, and 284–291; these read DSAL, QRIQR, RCVGYR, and KRQITWLR.

It belongs to the IPP transferase family. Monomer. Requires Mg(2+) as cofactor.

The catalysed reaction is adenosine(37) in tRNA + dimethylallyl diphosphate = N(6)-dimethylallyladenosine(37) in tRNA + diphosphate. In terms of biological role, catalyzes the transfer of a dimethylallyl group onto the adenine at position 37 in tRNAs that read codons beginning with uridine, leading to the formation of N6-(dimethylallyl)adenosine (i(6)A). This chain is tRNA dimethylallyltransferase, found in Acidovorax ebreus (strain TPSY) (Diaphorobacter sp. (strain TPSY)).